The chain runs to 245 residues: MRRYLILIVALIGITGLSGCYQTSHKKVRFDEGSYTNFIYDNKSYFVTDKEIPQENVNNSKVKFYKLLIVDMKSEKLLSSSNKNSVTLVLNNIYEASDKSLCMGINDRYYKILPESDKGAVKALRLQNFDVTSDISDDNFVIDKNDSRKIDYMGNIYSISDTTVSDEELGEYQDVLAEVRVFDSVSGKSIPRSEWGRIDKDGSNSKQSRTEWDYGEIHSIRGKSLTEAFAVEINDDFKLATKVGN.

A signal peptide spans 1–19; it reads MRRYLILIVALIGITGLSG. C20 carries the N-palmitoyl cysteine lipid modification. C20 carries S-diacylglycerol cysteine lipidation.

It localises to the cell membrane. Involved in immunity against exogenously supplied nisin. The polypeptide is Nisin immunity protein (nisI) (Lactococcus lactis subsp. lactis (Streptococcus lactis)).